A 105-amino-acid polypeptide reads, in one-letter code: Large ribosomal subunit protein uL24 (105 aa).

Belongs to the universal ribosomal protein uL24 family. In terms of assembly, part of the 50S ribosomal subunit.

One of two assembly initiator proteins, it binds directly to the 5'-end of the 23S rRNA, where it nucleates assembly of the 50S subunit. Functionally, one of the proteins that surrounds the polypeptide exit tunnel on the outside of the subunit. The polypeptide is Large ribosomal subunit protein uL24 (Novosphingobium aromaticivorans (strain ATCC 700278 / DSM 12444 / CCUG 56034 / CIP 105152 / NBRC 16084 / F199)).